A 140-amino-acid chain; its full sequence is Nucleoside diphosphate kinase (140 aa).

Positions 9, 57, 85, 91, 102, and 112 each coordinate ATP. The Pros-phosphohistidine intermediate role is filled by H115.

It belongs to the NDK family. In terms of assembly, homotetramer. Requires Mg(2+) as cofactor.

It localises to the cytoplasm. The catalysed reaction is a 2'-deoxyribonucleoside 5'-diphosphate + ATP = a 2'-deoxyribonucleoside 5'-triphosphate + ADP. The enzyme catalyses a ribonucleoside 5'-diphosphate + ATP = a ribonucleoside 5'-triphosphate + ADP. Major role in the synthesis of nucleoside triphosphates other than ATP. The ATP gamma phosphate is transferred to the NDP beta phosphate via a ping-pong mechanism, using a phosphorylated active-site intermediate. This is Nucleoside diphosphate kinase from Chlorobium chlorochromatii (strain CaD3).